We begin with the raw amino-acid sequence, 462 residues long: L-seryl-tRNA(Sec) selenium transferase (462 aa).

Position 293 is an N6-(pyridoxal phosphate)lysine (lysine 293).

This sequence belongs to the SelA family. Pyridoxal 5'-phosphate serves as cofactor.

It localises to the cytoplasm. It catalyses the reaction L-seryl-tRNA(Sec) + selenophosphate + H(+) = L-selenocysteinyl-tRNA(Sec) + phosphate. It participates in aminoacyl-tRNA biosynthesis; selenocysteinyl-tRNA(Sec) biosynthesis; selenocysteinyl-tRNA(Sec) from L-seryl-tRNA(Sec) (bacterial route): step 1/1. Converts seryl-tRNA(Sec) to selenocysteinyl-tRNA(Sec) required for selenoprotein biosynthesis. In Clostridium botulinum (strain Langeland / NCTC 10281 / Type F), this protein is L-seryl-tRNA(Sec) selenium transferase.